We begin with the raw amino-acid sequence, 329 residues long: Transcription factor RAX1 (329 aa).

2 HTH myb-type domains span residues 9–62 (KTKV…LNYL) and 63–117 (RPNI…RKKL). 2 DNA-binding regions (H-T-H motif) span residues 38-62 (WISF…LNYL) and 90-113 (WSII…NTKL). Composition is skewed to low complexity over residues 122–131 (SDSSSSAMAS) and 144–154 (PTSPTTIPSSS). Residues 122–162 (SDSSSSAMASPYLNPISQDVKRPTSPTTIPSSSYNPYAENP) form a disordered region.

Mostly expressed in roots. Also present in shoot tips and flower buds.

Its subcellular location is the nucleus. Transcription activator of genes involved in the regulation of meristematic competence, such as CUC2. Positively regulates axillary meristems (AMs) formation and development, especially at early phases of vegetative growth, probably by specifying a stem cell niche for AM formation. Modulates the negative regulation mediated by gibberellic acid on the timing of developmental phase transitions. In Arabidopsis thaliana (Mouse-ear cress), this protein is Transcription factor RAX1 (RAX1).